Here is a 128-residue protein sequence, read N- to C-terminus: Putative pre-16S rRNA nuclease (128 aa).

The protein belongs to the YqgF nuclease family.

The protein resides in the cytoplasm. In terms of biological role, could be a nuclease involved in processing of the 5'-end of pre-16S rRNA. This Sulfurovum sp. (strain NBC37-1) protein is Putative pre-16S rRNA nuclease.